A 340-amino-acid polypeptide reads, in one-letter code: Phenylalanine--tRNA ligase alpha subunit (340 aa).

Glu255 serves as a coordination point for Mg(2+).

Belongs to the class-II aminoacyl-tRNA synthetase family. Phe-tRNA synthetase alpha subunit type 1 subfamily. Tetramer of two alpha and two beta subunits. It depends on Mg(2+) as a cofactor.

It localises to the cytoplasm. It catalyses the reaction tRNA(Phe) + L-phenylalanine + ATP = L-phenylalanyl-tRNA(Phe) + AMP + diphosphate + H(+). This Heliobacterium modesticaldum (strain ATCC 51547 / Ice1) protein is Phenylalanine--tRNA ligase alpha subunit.